Consider the following 480-residue polypeptide: Glycogen synthase (480 aa).

An ADP-alpha-D-glucose-binding site is contributed by lysine 15.

Belongs to the glycosyltransferase 1 family. Bacterial/plant glycogen synthase subfamily.

It carries out the reaction [(1-&gt;4)-alpha-D-glucosyl](n) + ADP-alpha-D-glucose = [(1-&gt;4)-alpha-D-glucosyl](n+1) + ADP + H(+). It participates in glycan biosynthesis; glycogen biosynthesis. Its function is as follows. Synthesizes alpha-1,4-glucan chains using ADP-glucose. The chain is Glycogen synthase from Rhizobium johnstonii (strain DSM 114642 / LMG 32736 / 3841) (Rhizobium leguminosarum bv. viciae).